The following is a 167-amino-acid chain: NADH-ubiquinone oxidoreductase chain 6 (167 aa).

A run of 4 helical transmembrane segments spans residues 24–44 (PYFG…IILA), 54–74 (LLLI…ALVL), 85–105 (VLMK…GGYL), and 135–155 (WLLI…ILEI).

The protein belongs to the complex I subunit 6 family.

It is found in the mitochondrion membrane. The enzyme catalyses a ubiquinone + NADH + 5 H(+)(in) = a ubiquinol + NAD(+) + 4 H(+)(out). Its function is as follows. Core subunit of the mitochondrial membrane respiratory chain NADH dehydrogenase (Complex I) that is believed to belong to the minimal assembly required for catalysis. Complex I functions in the transfer of electrons from NADH to the respiratory chain. The immediate electron acceptor for the enzyme is believed to be ubiquinone. This is NADH-ubiquinone oxidoreductase chain 6 (MT-ND6) from Myxine glutinosa (Atlantic hagfish).